A 293-amino-acid chain; its full sequence is 4-hydroxy-tetrahydrodipicolinate synthase (293 aa).

A pyruvate-binding site is contributed by Thr45. The active-site Proton donor/acceptor is Tyr133. Residue Lys161 is the Schiff-base intermediate with substrate of the active site. Ile203 is a pyruvate binding site.

The protein belongs to the DapA family. As to quaternary structure, homotetramer; dimer of dimers.

It is found in the cytoplasm. The catalysed reaction is L-aspartate 4-semialdehyde + pyruvate = (2S,4S)-4-hydroxy-2,3,4,5-tetrahydrodipicolinate + H2O + H(+). It participates in amino-acid biosynthesis; L-lysine biosynthesis via DAP pathway; (S)-tetrahydrodipicolinate from L-aspartate: step 3/4. Functionally, catalyzes the condensation of (S)-aspartate-beta-semialdehyde [(S)-ASA] and pyruvate to 4-hydroxy-tetrahydrodipicolinate (HTPA). In Pseudoalteromonas atlantica (strain T6c / ATCC BAA-1087), this protein is 4-hydroxy-tetrahydrodipicolinate synthase.